Here is a 127-residue protein sequence, read N- to C-terminus: Aspartate 1-decarboxylase (127 aa).

Serine 25 acts as the Schiff-base intermediate with substrate; via pyruvic acid in catalysis. The residue at position 25 (serine 25) is a Pyruvic acid (Ser). Threonine 57 is a binding site for substrate. Catalysis depends on tyrosine 58, which acts as the Proton donor. 73-75 (GAA) is a binding site for substrate.

It belongs to the PanD family. Heterooctamer of four alpha and four beta subunits. Requires pyruvate as cofactor. Is synthesized initially as an inactive proenzyme, which is activated by self-cleavage at a specific serine bond to produce a beta-subunit with a hydroxyl group at its C-terminus and an alpha-subunit with a pyruvoyl group at its N-terminus.

Its subcellular location is the cytoplasm. The enzyme catalyses L-aspartate + H(+) = beta-alanine + CO2. It participates in cofactor biosynthesis; (R)-pantothenate biosynthesis; beta-alanine from L-aspartate: step 1/1. Its function is as follows. Catalyzes the pyruvoyl-dependent decarboxylation of aspartate to produce beta-alanine. The polypeptide is Aspartate 1-decarboxylase (Listeria monocytogenes serotype 4b (strain F2365)).